Consider the following 353-residue polypeptide: S-adenosylmethionine:tRNA ribosyltransferase-isomerase (353 aa).

Belongs to the QueA family. In terms of assembly, monomer.

It is found in the cytoplasm. It catalyses the reaction 7-aminomethyl-7-carbaguanosine(34) in tRNA + S-adenosyl-L-methionine = epoxyqueuosine(34) in tRNA + adenine + L-methionine + 2 H(+). It participates in tRNA modification; tRNA-queuosine biosynthesis. Its function is as follows. Transfers and isomerizes the ribose moiety from AdoMet to the 7-aminomethyl group of 7-deazaguanine (preQ1-tRNA) to give epoxyqueuosine (oQ-tRNA). The chain is S-adenosylmethionine:tRNA ribosyltransferase-isomerase from Dinoroseobacter shibae (strain DSM 16493 / NCIMB 14021 / DFL 12).